Here is a 567-residue protein sequence, read N- to C-terminus: Formate--tetrahydrofolate ligase (567 aa).

76–83 (TPAGEGKT) contributes to the ATP binding site.

The protein belongs to the formate--tetrahydrofolate ligase family.

The catalysed reaction is (6S)-5,6,7,8-tetrahydrofolate + formate + ATP = (6R)-10-formyltetrahydrofolate + ADP + phosphate. It participates in one-carbon metabolism; tetrahydrofolate interconversion. This is Formate--tetrahydrofolate ligase from Sinorhizobium medicae (strain WSM419) (Ensifer medicae).